A 123-amino-acid polypeptide reads, in one-letter code: Methanesulfonate monooxygenase ferredoxin subunit (123 aa).

Residues 4–99 (TYLCDAADVA…LKEEDGKLLA (96 aa)) form the Rieske domain. Residues C43, H45, C63, and H66 each coordinate [2Fe-2S] cluster.

This sequence belongs to the bacterial ring-hydroxylating dioxygenase ferredoxin component family. The MSA monooxygenase system consists of 4 proteins: the 2 subunits of the hydroxylase component (MsmA and MsmB), a ferredoxin (MsmC) and a ferredoxin reductase (MsmD). The ferredoxin component is dimeric. [2Fe-2S] cluster serves as cofactor.

The protein resides in the cytoplasm. The enzyme catalyses methanesulfonate + NADH + O2 = sulfite + formaldehyde + NAD(+) + H2O. Its activity is regulated as follows. MSAMO is inhibited by metal chelators (such as bathophenanthroline, bathocuprione, neocuprione, alpha-alpha-dipyridil and sodium EDTA) and by sodium azide, sodium arsenate and potassium cyanide. Its function is as follows. Methanesulfonate monooxygenase (MSAMO) mediates the primary degradation of methanesulfonic acid (MSA) to produce formaldehyd and inorganic sulfite by initial hydroxylation of the carbon atom prior to spontaneous cleavage of the unstable hydroxymethanesulfonic acid. MSAMO has a restricted substrate range that includes only the short-chain aliphatic sulfonates (methane- to butanesulfonate) and excludes all larger molecules, such as arylsulfonates and aromatic sulfonates. All MSAMO components are required for enzyme activity. This Methylosulfonomonas methylovora protein is Methanesulfonate monooxygenase ferredoxin subunit.